A 369-amino-acid chain; its full sequence is Probable trehalose-phosphate phosphatase D (369 aa).

The interval 63–85 (RASSPTRTRPGNISPLPESDEED) is disordered.

Belongs to the trehalose phosphatase family. Requires a divalent metal cation as cofactor.

The catalysed reaction is alpha,alpha-trehalose 6-phosphate + H2O = alpha,alpha-trehalose + phosphate. Its pathway is glycan biosynthesis; trehalose biosynthesis. Removes the phosphate from trehalose 6-phosphate to produce free trehalose. Trehalose accumulation in plant may improve abiotic stress tolerance. The polypeptide is Probable trehalose-phosphate phosphatase D (TPPD) (Arabidopsis thaliana (Mouse-ear cress)).